The following is a 741-amino-acid chain: Isocitrate dehydrogenase [NADP] (741 aa).

NADP(+) contacts are provided by N85 and S87. Positions 132, 135, 139, 145, and 255 each coordinate D-threo-isocitrate. N135 contacts NADP(+). A Mn(2+)-binding site is contributed by D350. D-threo-isocitrate-binding residues include Y420 and R547. D548 is a binding site for Mn(2+). Positions 585, 589, 600, 602, and 649 each coordinate NADP(+).

Belongs to the monomeric-type IDH family. Monomer. Requires Mg(2+) as cofactor. The cofactor is Mn(2+).

It localises to the cytoplasm. It carries out the reaction D-threo-isocitrate + NADP(+) = 2-oxoglutarate + CO2 + NADPH. With respect to regulation, activity is inhibited in the presence of Ca(2+). In terms of biological role, catalyzes the oxidative decarboxylation of isocitrate to 2-oxoglutarate and carbon dioxide with the concomitant reduction of NADP(+). This is Isocitrate dehydrogenase [NADP] from Azotobacter vinelandii.